The chain runs to 213 residues: Thiamine-phosphate synthase (213 aa).

4-amino-2-methyl-5-(diphosphooxymethyl)pyrimidine-binding positions include Gln-39–Lys-43 and Asn-71. Residues Asp-72 and Asp-91 each contribute to the Mg(2+) site. Residue Ser-110 participates in 4-amino-2-methyl-5-(diphosphooxymethyl)pyrimidine binding. 2-[(2R,5Z)-2-carboxy-4-methylthiazol-5(2H)-ylidene]ethyl phosphate is bound at residue Thr-136 to Thr-138. Position 139 (Lys-139) interacts with 4-amino-2-methyl-5-(diphosphooxymethyl)pyrimidine. 2-[(2R,5Z)-2-carboxy-4-methylthiazol-5(2H)-ylidene]ethyl phosphate-binding positions include Gly-166 and Val-186–Ser-187.

It belongs to the thiamine-phosphate synthase family. The cofactor is Mg(2+).

It catalyses the reaction 2-[(2R,5Z)-2-carboxy-4-methylthiazol-5(2H)-ylidene]ethyl phosphate + 4-amino-2-methyl-5-(diphosphooxymethyl)pyrimidine + 2 H(+) = thiamine phosphate + CO2 + diphosphate. It carries out the reaction 2-(2-carboxy-4-methylthiazol-5-yl)ethyl phosphate + 4-amino-2-methyl-5-(diphosphooxymethyl)pyrimidine + 2 H(+) = thiamine phosphate + CO2 + diphosphate. The enzyme catalyses 4-methyl-5-(2-phosphooxyethyl)-thiazole + 4-amino-2-methyl-5-(diphosphooxymethyl)pyrimidine + H(+) = thiamine phosphate + diphosphate. The protein operates within cofactor biosynthesis; thiamine diphosphate biosynthesis; thiamine phosphate from 4-amino-2-methyl-5-diphosphomethylpyrimidine and 4-methyl-5-(2-phosphoethyl)-thiazole: step 1/1. In terms of biological role, condenses 4-methyl-5-(beta-hydroxyethyl)thiazole monophosphate (THZ-P) and 2-methyl-4-amino-5-hydroxymethyl pyrimidine pyrophosphate (HMP-PP) to form thiamine monophosphate (TMP). In Clostridium botulinum (strain Eklund 17B / Type B), this protein is Thiamine-phosphate synthase.